A 276-amino-acid polypeptide reads, in one-letter code: Aquaporin-1 (276 aa).

At 1-10 the chain is on the cytoplasmic side; it reads MLDAEQKKNY. Residues 11 to 31 form a helical membrane-spanning segment; the sequence is VAGAFGEFVGTAYFLFMGVGG. The Extracellular portion of the chain corresponds to 32–46; that stretch reads AVNFLNNAAGSPLPG. The chain crosses the membrane as a helical span at residues 47–67; sequence FAIPFCFGFSLFVNVFIWAPI. Residues 68–93 are Cytoplasmic-facing; that stretch reads SGGVFNPSITIALMATNPKDFPWYRG. An NPA 1 motif is present at residues 73–75; it reads NPS. The helical transmembrane segment at 94–114 threads the bilayer; sequence ILYIVSQFLGALFGSWLIDLI. Residues 115-133 are Extracellular-facing; sequence QPEAPNAATLLADGVSVAQ. Residues 134-154 form a helical membrane-spanning segment; the sequence is GLFMEMFATSVLTMAVLILAG. At 155 to 159 the chain is on the cytoplasmic side; it reads ERYGK. Residues 160–180 form a helical membrane-spanning segment; the sequence is YLAPFGIGMSLFISALCAGPY. The Extracellular segment spans residues 181–204; sequence TGASLNPARTLGPAIVANQYGRAH. The NPA 2 signature appears at 186-188; sequence NPA. A helical membrane pass occupies residues 205-225; it reads WIYYVGPTLGSLLAAGYWHIL. Over 226–276 the chain is Cytoplasmic; that stretch reads RILNIDVVDLKNVLNKCKKCGKEDPRISLKHCEECLKDDPKPEKYDIESQN.

It belongs to the MIP/aquaporin (TC 1.A.8) family.

Its subcellular location is the cell membrane. The enzyme catalyses H2O(in) = H2O(out). Its activity is regulated as follows. Polyethylene glycol (PEG) stimulates whereas glycerol inhibits the aquaporin activity. In terms of biological role, water channel required to facilitate the transport of water across membranes. Stimulates plant drought tolerance by facilitating the transport of water from the arbuscular mycorrhiza fungus to host plants. This chain is Aquaporin-1, found in Rhizophagus irregularis (Arbuscular mycorrhizal fungus).